A 1563-amino-acid polypeptide reads, in one-letter code: MDTEREALQCTAYPEVQSFCQRHGLAFEVVDLRWGIPNTQATDYLTTELCLEELERCQKTSIGPAFVALLGDQYGPCPVPRRIEEKEWEALRAQLTSRPRDLELVTRHFQRDDNTIPPTYVLQPSGSLVVPGPEEATLTSVLRGGAQEAWRLGLISQEQWMCYHRSVIEWEIELGLLSSARGDQGATVFLRDVQDLNKHILDDCSLKMVDRLVDGCLDTNAQSLLSGLKGRILDAQPGALKSHHLSWSRDLVNPKNKAHARYLKQLSEQFVARTNHQVLEQLRELELARQELGWLYQEIRHHLWQSTESTKVFCGHQELLAQLRQQLRQDESRTHTPLVLFGPPGIGKTSLMCKLAQQVPELLGHKTVVVLRLLGTSKLSLDARSLLRSLSFQVCLAYGLPLPPAQVLEAHSRVGHFFHTLLHTVSQRNFESLVLLLDSVDDLDSICHSPRVSWLPLKCPPRVHLILSTCSGQQVLHNLQQTLKDPSTYWEVKALSGSQGQEFIQLLLAAEKRMLSPGQRDVLWASLPECGHPGRLRLAFEEARKWASFTVPVPLATTAEEATHQLCIRLEETHGALLVAHVLGYIVSSRYGLSEAELKDVLSLDDEVLQAVYRDWTPPSKELLRFPPLLWVRLRRDLGHCLVRRPVDGCMLLAIAHRQLSQVIQVRYLSGPERAKRHGVLAEFFSGAWSQGIKKLITLPLVGKPLNLDRKVAPQPLWFSSTVANLRKLTELPFHLLHAGRLEELKQEVLGNMSWISCRGISGGIEVLLDDFDMCAPHMNSPEVDLVREAIQLCGPAVELRGLEKSVLYTELLARLLFFAASHPAMIGQLCQQAQSWFRACPYPMLVPLAGFLQPPGGPLRATLTGCHKGITAIAWSLEEKLLVVGTQDGAMVVWDVEEQQVVHVLMGHTAEVKCVRVFAQGTLAISASKDHTLRLWSLLSGQEKVTILDGGSQNPTEPQSWDLHVDERNNVVYSTSGARINMWNLETSKLVFCITGDVSDPWVCVALLAAQGLLLALSKGGQVSLWSSAMGKLQEKHQLSSIKEETPTCAVSIQSRARLVAGFSSGSIALVSAGEDRLLEKLPEAVGFLVVSEDDSLLVAGFGRFVRIFLADSQGFHRFMASDLEHEDMVETAVLGPENNLIITGSRDALIQVWSLSEQGTLLNVLEGVGAPVSLLVRGGTLVVSASRKSSSFKVWDLKSTKKLQSPTPFLDRTGLAAVSHHGSFVYFPKVGDKNKVTIWDLAEGEEQDCLDTSNEVRCLEVAEQAKLLFTGLVSGIVLVFPLNSRQDVLCIPPPEARKAVNCMSLSKSENRLAIAYDNIVLVLDISPGDPCPAIEGPTYTFYTQLPETIVSVAVLADYRVVYGMSDGSLFLYDCACSKVFPLEAHGSRVSCVEVSHSEQLAVSGAEDALLCLWDLQACRGMFEMSYENSCCRGVRCACFSRDDKHVFAGMEDRSVTAWSTVDGTLLAVQFVHAVINRIIPTSNGFMAPTSHGYLIRERFQCPSVRASQQDPLKNFKKAVWLVKTRQREELAAAEASQDAEPVAVEGKESKSNKRSQVCLIL.

One copy of the WD 1 repeat lies at 274-314 (TNHQVLEQLRELELARQELGWLYQEIRHHLWQSTESTKVFC). The region spanning 336–666 (TPLVLFGPPG…HRQLSQVIQV (331 aa)) is the NACHT domain. 342–349 (GPPGIGKT) lines the ATP pocket. WD repeat units follow at residues 866–905 (GCHK…VVHV), 908–947 (GHTA…EKVT), 954–994 (QNPT…LVFC), 998–1037 (DVSD…LQEK), 1044–1082 (KEET…LLEK), 1126–1165 (EHED…TLLN), 1168–1207 (EGVG…KLQS), 1212–1251 (LDRT…EQDC), 1253–1292 (DTSN…DVLC), 1346–1385 (QLPE…FPLE), 1386–1425 (AHGS…GMFE), and 1431–1470 (SCCR…LLAV). A disordered region spans residues 1534 to 1563 (AAEASQDAEPVAVEGKESKSNKRSQVCLIL).

May interact with HSP90AA1, HSP90AB1 and BAG2.

It is found in the cytoplasm. The protein resides in the cytosol. May play a role in the control of androgen receptor (AR) protein steady-state levels. The polypeptide is NACHT domain- and WD repeat-containing protein 1 (Nwd1) (Mus musculus (Mouse)).